The sequence spans 1195 residues: ATP-dependent DNA helicase Hel308 (1195 aa).

ATP-binding positions include Q20 and 39–46; that span reads IPTASGKT. Residues 26–196 enclose the Helicase ATP-binding domain; sequence RGLLDKNKNF…WLNAELIVDD (171 aa). The DEAH box signature appears at 143 to 146; that stretch reads DEIH. The DOD-type homing endonuclease domain occupies 451–584; the sequence is FIGYFIGDGY…LQFVLLRFGI (134 aa).

It belongs to the helicase family. Hel308 subfamily. As to quaternary structure, monomer. This protein undergoes a protein self splicing that involves a post-translational excision of the intervening region (intein) followed by peptide ligation.

The enzyme catalyses Couples ATP hydrolysis with the unwinding of duplex DNA by translocating in the 3'-5' direction.. The catalysed reaction is ATP + H2O = ADP + phosphate + H(+). Its function is as follows. DNA-dependent ATPase and 3'-5' DNA helicase that may be involved in repair of stalled replication forks. This Methanocaldococcus jannaschii (strain ATCC 43067 / DSM 2661 / JAL-1 / JCM 10045 / NBRC 100440) (Methanococcus jannaschii) protein is ATP-dependent DNA helicase Hel308.